The following is a 354-amino-acid chain: Phosphatidylserine decarboxylase proenzyme (354 aa).

Residues tyrosine 18–tyrosine 36 traverse the membrane as a helical segment. Residues aspartate 139, histidine 198, and serine 308 each act as charge relay system; for autoendoproteolytic cleavage activity in the active site. Residue serine 308 is the Schiff-base intermediate with substrate; via pyruvic acid; for decarboxylase activity of the active site. Pyruvic acid (Ser); by autocatalysis is present on serine 308.

It belongs to the phosphatidylserine decarboxylase family. PSD-B subfamily. Eukaryotic type I sub-subfamily. Heterodimer of a large membrane-associated beta subunit and a small pyruvoyl-containing alpha subunit. Pyruvate is required as a cofactor. Is synthesized initially as an inactive proenzyme. Formation of the active enzyme involves a self-maturation process in which the active site pyruvoyl group is generated from an internal serine residue via an autocatalytic post-translational modification. Two non-identical subunits are generated from the proenzyme in this reaction, and the pyruvate is formed at the N-terminus of the alpha chain, which is derived from the carboxyl end of the proenzyme. The autoendoproteolytic cleavage occurs by a canonical serine protease mechanism, in which the side chain hydroxyl group of the serine supplies its oxygen atom to form the C-terminus of the beta chain, while the remainder of the serine residue undergoes an oxidative deamination to produce ammonia and the pyruvoyl prosthetic group on the alpha chain. During this reaction, the Ser that is part of the protease active site of the proenzyme becomes the pyruvoyl prosthetic group, which constitutes an essential element of the active site of the mature decarboxylase.

Its subcellular location is the membrane. It localises to the endoplasmic reticulum membrane. The catalysed reaction is a 1,2-diacyl-sn-glycero-3-phospho-L-serine + H(+) = a 1,2-diacyl-sn-glycero-3-phosphoethanolamine + CO2. It functions in the pathway phospholipid metabolism; phosphatidylethanolamine biosynthesis; phosphatidylethanolamine from CDP-diacylglycerol: step 2/2. Its activity is regulated as follows. Protease activity is inhibited by PMSF. Its function is as follows. Catalyzes the formation of phosphatidylethanolamine (PtdEtn) from phosphatidylserine (PtdSer). Plays a central role in phospholipid metabolism and in the interorganelle trafficking of phosphatidylserine. This chain is Phosphatidylserine decarboxylase proenzyme, found in Plasmodium knowlesi (strain H).